Here is a 396-residue protein sequence, read N- to C-terminus: Period circadian protein (396 aa).

4 disordered regions span residues 27–120, 164–188, 253–273, and 333–362; these read VTAP…APPV, LEYS…WEGE, GGNG…TNQY, and SPSS…TSQA. Positions 93 to 114 are enriched in gly residues; it reads GTSGTGNSGDGGGGGGANGTGS. Positions 253–262 are enriched in gly residues; that stretch reads GGNGNVGSGN. The segment covering 333–342 has biased composition (low complexity); it reads SPSSTNTNPN.

As to quaternary structure, forms a heterodimer with timeless (TIM); the complex then translocates into the nucleus. In terms of processing, phosphorylated with a circadian rhythmicity, probably by the double-time protein (dbt). Phosphorylation could be implicated in the stability of per monomer and in the formation of heterodimer per-tim.

It is found in the nucleus. The protein localises to the cytoplasm. The protein resides in the perinuclear region. Its function is as follows. Essential for biological clock functions. Determines the period length of circadian and ultradian rhythms; an increase in PER dosage leads to shortened circadian rhythms and a decrease leads to lengthened circadian rhythms. Essential for the circadian rhythmicity of locomotor activity, eclosion behavior, and for the rhythmic component of the male courtship song that originates in the thoracic nervous system. The biological cycle depends on the rhythmic formation and nuclear localization of the TIM-PER complex. Light induces the degradation of TIM, which promotes elimination of PER. Nuclear activity of the heterodimer coordinatively regulates PER and TIM transcription through a negative feedback loop. Behaves as a negative element in circadian transcriptional loop. Does not appear to bind DNA, suggesting indirect transcriptional inhibition. The sequence is that of Period circadian protein (per) from Drosophila pavlovskiana (Fruit fly).